Consider the following 159-residue polypeptide: Urease accessory protein UreE (159 aa).

Belongs to the UreE family.

Its subcellular location is the cytoplasm. Its function is as follows. Involved in urease metallocenter assembly. Binds nickel. Probably functions as a nickel donor during metallocenter assembly. The protein is Urease accessory protein UreE of Vibrio parahaemolyticus.